A 294-amino-acid polypeptide reads, in one-letter code: Homeobox protein Nkx-2.5 (294 aa).

Disordered stretches follow at residues 48–69 (GSEPPALPELPEPPPAKPPAAF) and 102–122 (EQEKRELEDPERPRQRKRRKP). Positions 52-69 (PALPELPEPPPAKPPAAF) are enriched in pro residues. Basic and acidic residues predominate over residues 102–114 (EQEKRELEDPERP). The homeobox DNA-binding region spans 119 to 178 (RRKPRVLFSQAQVYELERRFKQQKYLSAPERDHLANVLKLTSTQVKIWFQNRRYKCKRQR).

It belongs to the NK-2 homeobox family. Homodimer (via the homeobox); binds DNA as homodimer.

The protein resides in the nucleus. Its function is as follows. Transcription factor required for the development of the heart and the spleen. Implicated in commitment to and/or differentiation of the myocardial lineage. Binds to the core DNA motif of promoter. This Gallus gallus (Chicken) protein is Homeobox protein Nkx-2.5 (NKX-2.5).